A 369-amino-acid chain; its full sequence is Cobalt-precorrin-5B C(1)-methyltransferase (369 aa).

The protein belongs to the CbiD family.

The enzyme catalyses Co-precorrin-5B + S-adenosyl-L-methionine = Co-precorrin-6A + S-adenosyl-L-homocysteine. It participates in cofactor biosynthesis; adenosylcobalamin biosynthesis; cob(II)yrinate a,c-diamide from sirohydrochlorin (anaerobic route): step 6/10. Its function is as follows. Catalyzes the methylation of C-1 in cobalt-precorrin-5B to form cobalt-precorrin-6A. The sequence is that of Cobalt-precorrin-5B C(1)-methyltransferase from Geobacter metallireducens (strain ATCC 53774 / DSM 7210 / GS-15).